Reading from the N-terminus, the 156-residue chain is Protein archease-like (156 aa).

Asp-25, Asp-155, and Ile-156 together coordinate Ca(2+).

This sequence belongs to the archease family.

Functionally, component of the tRNA-splicing ligase complex required to facilitate the enzymatic turnover of catalytic subunit RtcB. Plays an important role in a RNA repair and splicing pathway which controls axon regeneration in response to peripheral (PNS) and central nervous system (CNS) injury, by activating splicing of Xbp1 to promote axon regeneration in response to axotomy. The chain is Protein archease-like from Drosophila melanogaster (Fruit fly).